The primary structure comprises 1265 residues: Kinesin-related protein 13 (1265 aa).

One can recognise a Kinesin motor domain in the interval 23-350 (NIQAFVRVRP…LEYALKAKNI (328 aa)). 106-113 (GQTGTGKT) contributes to the ATP binding site. The stretch at 331–459 (LVNLEETINT…KQQQEKQKFI (129 aa)) forms a coiled coil. Disordered regions lie at residues 918–1026 (KSGE…QPLI), 1085–1119 (SLVN…LSQL), 1127–1146 (LQPQ…LNGS), 1158–1214 (LLDD…NQSL), and 1245–1265 (FGGG…TPLK). A compositionally biased stretch (low complexity) spans 930–951 (IPSPISTSSSSSSSSSISSIHS). 3 stretches are compositionally biased toward polar residues: residues 960–980 (HQSI…SINC), 1003–1026 (LNLN…QPLI), and 1085–1097 (SLVN…SPKL). 2 stretches are compositionally biased toward low complexity: residues 1100-1119 (QKIL…LSQL) and 1128-1146 (QPQQ…LNGS). Over residues 1158–1169 (LLDDDSDSDNSD) the composition is skewed to acidic residues. Residues 1174–1195 (SLLSSNKKSSRASKNAVVSKKV) are compositionally biased toward low complexity. Residues 1250 to 1265 (TISSKLKSLKQQTPLK) are compositionally biased toward polar residues.

It belongs to the TRAFAC class myosin-kinesin ATPase superfamily. Kinesin family. BimC subfamily.

Its subcellular location is the cytoplasm. It is found in the cytoskeleton. Its function is as follows. Microtubule-associated force-producing protein that plays a role in organelle transport. Its motor activity is directed toward the microtubule's plus end. Cooperates with dynein to control the spindle elongation rate, but is dispensable for mitosis. The protein is Kinesin-related protein 13 (kif13) of Dictyostelium discoideum (Social amoeba).